The primary structure comprises 312 residues: Very-long-chain 3-oxoacyl-CoA reductase (312 aa).

The helical transmembrane segment at Ala-4–Leu-24 threads the bilayer. Gly-50–Leu-79 is an NADP(+) binding site. A run of 2 helical transmembrane segments spans residues Gly-182–Tyr-202 and Gly-271–Leu-291. Ser-189 provides a ligand contact to substrate. The active-site Proton acceptor is Tyr-202. Residues Lys-308 to Asn-312 carry the Di-lysine motif motif.

Belongs to the short-chain dehydrogenases/reductases (SDR) family. 17-beta-HSD 3 subfamily. In terms of assembly, interacts with ELOVL1 and LASS2. In terms of tissue distribution, expressed in most tissues tested. Highly expressed in the ovary and mammary. Expressed in platelets.

It localises to the endoplasmic reticulum membrane. The catalysed reaction is a very-long-chain (3R)-3-hydroxyacyl-CoA + NADP(+) = a very-long-chain 3-oxoacyl-CoA + NADPH + H(+). It catalyses the reaction 17beta-estradiol + NAD(+) = estrone + NADH + H(+). The enzyme catalyses 17beta-estradiol + NADP(+) = estrone + NADPH + H(+). It carries out the reaction 3-oxooctadecanoyl-CoA + NADPH + H(+) = (3R)-hydroxyoctadecanoyl-CoA + NADP(+). The catalysed reaction is (7Z,10Z,13Z,16Z)-3-oxodocosatetraenoyl-CoA + NADPH + H(+) = (3R)-hydroxy-(7Z,10Z,13Z,16Z)-docosatetraenoyl-CoA + NADP(+). It catalyses the reaction 3-oxo-(7Z,10Z,13Z,16Z,19Z)-docosapentaenoyl-CoA + NADPH + H(+) = (3R)-hydroxy-(7Z,10Z,13Z,16Z,19Z)-docosapentaenoyl-CoA + NADP(+). The enzyme catalyses (8Z,11Z,14Z)-3-oxoeicosatrienoyl-CoA + NADPH + H(+) = (3R)-hydroxy-(8Z,11Z,14Z)-eicosatrienoyl-CoA + NADP(+). The protein operates within lipid metabolism; fatty acid biosynthesis. Its pathway is steroid biosynthesis; estrogen biosynthesis. Functionally, catalyzes the second of the four reactions of the long-chain fatty acids elongation cycle. This endoplasmic reticulum-bound enzymatic process, allows the addition of two carbons to the chain of long- and very long-chain fatty acids/VLCFAs per cycle. This enzyme has a 3-ketoacyl-CoA reductase activity, reducing 3-ketoacyl-CoA to 3-hydroxyacyl-CoA, within each cycle of fatty acid elongation. Thereby, it may participate in the production of VLCFAs of different chain lengths that are involved in multiple biological processes as precursors of membrane lipids and lipid mediators. May also catalyze the transformation of estrone (E1) into estradiol (E2) and play a role in estrogen formation. This Homo sapiens (Human) protein is Very-long-chain 3-oxoacyl-CoA reductase.